We begin with the raw amino-acid sequence, 179 residues long: Peptide deformylase (179 aa).

Fe cation is bound by residues cysteine 102 and histidine 144. Residue glutamate 145 is part of the active site. Histidine 148 lines the Fe cation pocket.

It belongs to the polypeptide deformylase family. It depends on Fe(2+) as a cofactor.

The enzyme catalyses N-terminal N-formyl-L-methionyl-[peptide] + H2O = N-terminal L-methionyl-[peptide] + formate. Removes the formyl group from the N-terminal Met of newly synthesized proteins. Requires at least a dipeptide for an efficient rate of reaction. N-terminal L-methionine is a prerequisite for activity but the enzyme has broad specificity at other positions. The polypeptide is Peptide deformylase (Wolbachia pipientis wMel).